The primary structure comprises 99 residues: PE-PGRS family protein PE25 (99 aa).

Positions 1 to 92 (MSFVITNPEA…GADKYATAEA (92 aa)) constitute a PE domain. Ser2 carries the post-translational modification N-acetylserine.

This sequence belongs to the mycobacterial PE family. As to quaternary structure, forms a heterodimer with PPE41. The dimer forms a 1:1:1 heterotrimeric complex with EspG5. Interacts with PPE51.

It is found in the secreted. Its function is as follows. The PE25/PPE41 dimer induces both a strong humoral and cellular immune response. PE25 protein alone induces low response. The dimer induces necrosis, but not apoptosis, in mouse macrophage cells. It also induces activation and maturation of mouse dendritic cells and drives Th2-biased immune responses. The chain is PE-PGRS family protein PE25 from Mycobacterium tuberculosis (strain ATCC 25618 / H37Rv).